The sequence spans 137 residues: Large ribosomal subunit protein uL16 (137 aa).

It belongs to the universal ribosomal protein uL16 family. Part of the 50S ribosomal subunit.

Its function is as follows. Binds 23S rRNA and is also seen to make contacts with the A and possibly P site tRNAs. The polypeptide is Large ribosomal subunit protein uL16 (Streptococcus mutans serotype c (strain ATCC 700610 / UA159)).